The chain runs to 567 residues: Unguisins hydrolase ungD (567 aa).

It belongs to the peptidase S12 family.

The protein operates within secondary metabolite biosynthesis. Functionally, hydrolase; part of the gene cluster that mediates the biosynthesis of the unguisins, gamma-aminobutyric acid (GABA)-containing fungal cyclic heptapeptides with the amino acid sequence cyclo-(D-Ala1-D-Val2-L-Phe3-D-Val4-D-Ala5-D-Trp6-GABA7) for unguisin A and cyclo-(D-Ala1-D-Val2-L-Leu3-D-Val4-D-Ala5-D-Trp6-GABA7) for unguisin B. Within the pathway, the hydrolase ungD catalyzes the hydrolysis between the D-tryptophan and GABA residues of unguisins A and B to produce the corresponding linear peptides. The alanine racemase ungC catalyzes the interconversion of L-alanine and D-alanine, providing the D-alanine which is accepted by the first adenylation domain of the nonribosomal peptide synthetase (NRPS) ungA. UngA is the main enzyme within the cluster which condenses the 7 residues using its respective 7 modules. The terminal condensation domain (Ct) is involved in cyclization with D-alanine and thereby releasing of unguisins A and B. The chain is Unguisins hydrolase ungD from Aspergillus violaceofuscus (strain CBS 115571).